A 505-amino-acid polypeptide reads, in one-letter code: Glycerol kinase (505 aa).

An ADP-binding site is contributed by Thr-14. ATP-binding residues include Thr-14, Thr-15, and Ser-16. Residue Thr-14 coordinates sn-glycerol 3-phosphate. Residue Arg-18 participates in ADP binding. Arg-84, Glu-85, Tyr-136, and Asp-246 together coordinate sn-glycerol 3-phosphate. Glycerol is bound by residues Arg-84, Glu-85, Tyr-136, Asp-246, and Gln-247. Residues Thr-268 and Gly-311 each contribute to the ADP site. Residues Thr-268, Gly-311, Gln-315, and Gly-412 each contribute to the ATP site. Positions 412 and 416 each coordinate ADP.

Belongs to the FGGY kinase family.

The enzyme catalyses glycerol + ATP = sn-glycerol 3-phosphate + ADP + H(+). It participates in polyol metabolism; glycerol degradation via glycerol kinase pathway; sn-glycerol 3-phosphate from glycerol: step 1/1. With respect to regulation, inhibited by fructose 1,6-bisphosphate (FBP). Key enzyme in the regulation of glycerol uptake and metabolism. Catalyzes the phosphorylation of glycerol to yield sn-glycerol 3-phosphate. The protein is Glycerol kinase of Vibrio cholerae serotype O1 (strain ATCC 39315 / El Tor Inaba N16961).